Here is a 52-residue protein sequence, read N- to C-terminus: METTSFGFAASLLFVGVPTIFLIGLFVSTSDGEKSSFYSDTSKGRLSPEPKK.

The chain crosses the membrane as a helical span at residues 6 to 26 (FGFAASLLFVGVPTIFLIGLF). The interval 31–52 (DGEKSSFYSDTSKGRLSPEPKK) is disordered. Over residues 42-52 (SKGRLSPEPKK) the composition is skewed to basic and acidic residues.

This sequence belongs to the PsbM family. As to quaternary structure, PSII is composed of 1 copy each of membrane proteins PsbA, PsbB, PsbC, PsbD, PsbE, PsbF, PsbH, PsbI, PsbJ, PsbK, PsbL, PsbM, PsbT, PsbX, PsbY, Psb30/Ycf12, peripheral proteins PsbO, CyanoQ (PsbQ), PsbU, PsbV and a large number of cofactors. It forms dimeric complexes.

The protein resides in the cellular thylakoid membrane. In terms of biological role, one of the components of the core complex of photosystem II (PSII). PSII is a light-driven water:plastoquinone oxidoreductase that uses light energy to abstract electrons from H(2)O, generating O(2) and a proton gradient subsequently used for ATP formation. It consists of a core antenna complex that captures photons, and an electron transfer chain that converts photonic excitation into a charge separation. This subunit is found at the monomer-monomer interface. The chain is Photosystem II reaction center protein M from Prochlorococcus marinus (strain NATL1A).